We begin with the raw amino-acid sequence, 253 residues long: Isoprenyl transferase (253 aa).

The active site involves D32. D32 contacts Mg(2+). Residues 33–36, W37, R45, H49, and 77–79 contribute to the substrate site; these read GNGR and STE. N80 serves as the catalytic Proton acceptor. Residues W81, R83, R200, and 206 to 208 each bind substrate; that span reads RLS. Position 219 (E219) interacts with Mg(2+).

This sequence belongs to the UPP synthase family. In terms of assembly, homodimer. It depends on Mg(2+) as a cofactor.

Functionally, catalyzes the condensation of isopentenyl diphosphate (IPP) with allylic pyrophosphates generating different type of terpenoids. The sequence is that of Isoprenyl transferase from Clostridium perfringens (strain 13 / Type A).